The chain runs to 480 residues: Zinc metalloproteinase/disintegrin (480 aa).

The signal sequence occupies residues 1-20 (MIQVLLITICLAVFPFQGSS). Positions 21–190 (IVLDSGNLNE…KASQLNVSPD (170 aa)) are excised as a propeptide. The 195-residue stretch at 197 to 391 (RFIKLAIYVD…HSPQCILNDP (195 aa)) folds into the Peptidase M12B domain. 2 N-linked (GlcNAc...) asparagine glycosylation sites follow: N259 and N279. 9 cysteine pairs are disulfide-bonded: C308/C386, C348/C370, C350/C353, C413/C428, C415/C423, C422/C445, C436/C442, C441/C466, and C454/C473. A Zn(2+)-binding site is contributed by H333. The active site involves E334. Zn(2+)-binding residues include H337 and H343. Positions 399–480 (TPVSGNELLE…AGCPRNPFHA (82 aa)) constitute a Disintegrin domain. The Cell attachment site signature appears at 458–460 (RGD).

The protein belongs to the venom metalloproteinase (M12B) family. P-II subfamily. P-IIa sub-subfamily. Monomer. The cofactor is Zn(2+). As to expression, expressed by the venom gland.

Its subcellular location is the secreted. Functionally, impairs hemostasis in the envenomed animal. Inhibits platelet aggregation and bone resorption. The polypeptide is Zinc metalloproteinase/disintegrin (Gloydius halys (Chinese water mocassin)).